The primary structure comprises 505 residues: Protein disulfide-isomerase A3 (505 aa).

The signal sequence occupies residues 1-24; the sequence is MRLRRLALFPGVALLLAAARLAAA. The Thioredoxin 1 domain maps to 25–133; it reads SDVLELTDDN…IVSHLKKQAG (109 aa). Catalysis depends on nucleophile residues Cys-57 and Cys-60. A disulfide bridge connects residues Cys-57 and Cys-60. Position 61 is an N6-methyllysine (Lys-61). Cys-85 and Cys-92 form a disulfide bridge. N6-succinyllysine is present on Lys-129. The residue at position 152 (Lys-152) is an N6-acetyllysine. N6-succinyllysine is present on Lys-218. Lys-252 bears the N6-acetyllysine mark. At Thr-319 the chain carries Phosphothreonine. The region spanning 343-485 is the Thioredoxin 2 domain; sequence SRDGKALERF…FISYLQREAT (143 aa). Lys-362 is subject to N6-acetyllysine. Active-site nucleophile residues include Cys-406 and Cys-409. Cys-406 and Cys-409 form a disulfide bridge. The interval 484-505 is disordered; sequence ATNPPVIQEEKPKKKKKAQEDL. Over residues 491–505 the composition is skewed to basic and acidic residues; it reads QEEKPKKKKKAQEDL. An N6-acetyllysine modification is found at Lys-494. Positions 502–505 match the Prevents secretion from ER motif; sequence QEDL.

This sequence belongs to the protein disulfide isomerase family. In terms of assembly, part of the major histocompatibility complex class I (MHC I) peptide loading complex composed of TAP1, TAP2, B2M, MHC heavy chain, TAPBP, PDIA3, and CALR. Interacts with ERP27 and CANX. Interacts with SERPINA2 and with SERPINA1. Interacts with ATP2A2. Within the major histocompatibility complex class I (MHC I) peptide loading complex forms reversible disulfide-linked heterodimers with TAPBP as part of its protein folding chaperone activity. This is essential to assist the dynamic assembly of the MHC I complex with high affinity antigens in the endoplasmic reticulum. Post-translationally, phosphorylated.

It localises to the endoplasmic reticulum. It is found in the endoplasmic reticulum lumen. The protein localises to the melanosome. The enzyme catalyses Catalyzes the rearrangement of -S-S- bonds in proteins.. Protein disulfide isomerase that catalyzes the formation, isomerization, and reduction or oxidation of disulfide bonds in client proteins and functions as a protein folding chaperone. Core component of the major histocompatibility complex class I (MHC I) peptide loading complex where it functions as an essential folding chaperone for TAPBP. Through TAPBP, assists the dynamic assembly of the MHC I complex with high affinity antigens in the endoplasmic reticulum. Therefore, plays a crucial role in the presentation of antigens to cytotoxic T cells in adaptive immunity. This chain is Protein disulfide-isomerase A3 (PDIA3), found in Chlorocebus aethiops (Green monkey).